The following is a 329-amino-acid chain: Malate dehydrogenase (329 aa).

13-19 is a binding site for NAD(+); sequence GAAGNIS. Residues arginine 94 and arginine 100 each coordinate substrate. NAD(+)-binding positions include asparagine 107, glutamine 114, and 131 to 133; that span reads VGN. Residues asparagine 133 and arginine 164 each contribute to the substrate site. Histidine 189 functions as the Proton acceptor in the catalytic mechanism.

It belongs to the LDH/MDH superfamily. MDH type 2 family.

It catalyses the reaction (S)-malate + NAD(+) = oxaloacetate + NADH + H(+). Its function is as follows. Catalyzes the reversible oxidation of malate to oxaloacetate. The protein is Malate dehydrogenase of Psychrobacter cryohalolentis (strain ATCC BAA-1226 / DSM 17306 / VKM B-2378 / K5).